We begin with the raw amino-acid sequence, 269 residues long: Formamidopyrimidine-DNA glycosylase (269 aa).

The Schiff-base intermediate with DNA role is filled by proline 2. Residue glutamate 3 is the Proton donor of the active site. Catalysis depends on lysine 57, which acts as the Proton donor; for beta-elimination activity. Positions 90, 109, and 150 each coordinate DNA. The FPG-type zinc-finger motif lies at 235–269; that stretch reads QVYGRKGEPCRVCGTPIVATKHAQRATFYCRHCQK. Catalysis depends on arginine 259, which acts as the Proton donor; for delta-elimination activity.

The protein belongs to the FPG family. Monomer. Requires Zn(2+) as cofactor.

The enzyme catalyses Hydrolysis of DNA containing ring-opened 7-methylguanine residues, releasing 2,6-diamino-4-hydroxy-5-(N-methyl)formamidopyrimidine.. The catalysed reaction is 2'-deoxyribonucleotide-(2'-deoxyribose 5'-phosphate)-2'-deoxyribonucleotide-DNA = a 3'-end 2'-deoxyribonucleotide-(2,3-dehydro-2,3-deoxyribose 5'-phosphate)-DNA + a 5'-end 5'-phospho-2'-deoxyribonucleoside-DNA + H(+). Involved in base excision repair of DNA damaged by oxidation or by mutagenic agents. Acts as a DNA glycosylase that recognizes and removes damaged bases. Has a preference for oxidized purines, such as 7,8-dihydro-8-oxoguanine (8-oxoG). Has AP (apurinic/apyrimidinic) lyase activity and introduces nicks in the DNA strand. Cleaves the DNA backbone by beta-delta elimination to generate a single-strand break at the site of the removed base with both 3'- and 5'-phosphates. The polypeptide is Formamidopyrimidine-DNA glycosylase (Salmonella heidelberg (strain SL476)).